The primary structure comprises 148 residues: Large ribosomal subunit protein bL9 (148 aa).

It belongs to the bacterial ribosomal protein bL9 family.

In terms of biological role, binds to the 23S rRNA. This is Large ribosomal subunit protein bL9 from Pseudomonas aeruginosa (strain LESB58).